A 424-amino-acid chain; its full sequence is MTAITDIIAREILDSRGNPTVEVDVYLEDGSMGRAAVPSGASTGAHEAVELRDGGKRYLGKGVQKAVDAANTEIFDAIGGIDAENQIQIDNIMIELDGTPNKSRLGANAILGVSLAVAKAAAQASGLPLYRYVGGASACLLPVPMMNIINGGAHADNPIDFQEFMILPVGADTIAEAVRMGSEVFHTLRKELAAQGHNTNVGDEGGFAPGLKSAPEALDFIMKSIEKAGYKPGDDMCLGLDCASTEFFKDGKYVLEGEGRTLESGAMAEYLAELAAKYPIISIEDGMAEDDWDGWKTLTDLTGKKTQLVGDDLFVTNSARLRDGIRMGVANSILVKVNQIGSLTETLDAVNTAHKAAYTAVMSHRSGETEDSTIADLAVATNCGQIKTGSLSRSDRLAKYNQLIRIEEGLGPQAQYAGRSIIRG.

Gln162 serves as a coordination point for (2R)-2-phosphoglycerate. Glu204 (proton donor) is an active-site residue. Mg(2+)-binding residues include Asp241, Glu284, and Asp311. 4 residues coordinate (2R)-2-phosphoglycerate: Lys336, Arg365, Ser366, and Lys387. The Proton acceptor role is filled by Lys336.

The protein belongs to the enolase family. Mg(2+) is required as a cofactor.

It localises to the cytoplasm. The protein resides in the secreted. It is found in the cell surface. It catalyses the reaction (2R)-2-phosphoglycerate = phosphoenolpyruvate + H2O. It functions in the pathway carbohydrate degradation; glycolysis; pyruvate from D-glyceraldehyde 3-phosphate: step 4/5. Functionally, catalyzes the reversible conversion of 2-phosphoglycerate (2-PG) into phosphoenolpyruvate (PEP). It is essential for the degradation of carbohydrates via glycolysis. This Rhizobium leguminosarum bv. trifolii (strain WSM2304) protein is Enolase.